We begin with the raw amino-acid sequence, 175 residues long: ATP synthase subunit d, mitochondrial (175 aa).

Serine 2 carries the post-translational modification N-acetylserine.

F-type ATP synthases have 2 components, the catalytic core F(1) and the membrane-embedded component F(0), linked together by a central stalk and a peripheral stalk. The central stalk, also called rotor shaft, is often seen as part of F(1). The peripheral stalk is seen as part of F(0). F(0) contains the membrane channel next to the rotor. F-type ATP synthases form dimers but each monomer functions independently in ATP generation. The dimer consists of 18 different polypeptides: ATP1 (subunit alpha, part of F(1), 3 molecules per monomer), ATP2 (subunit beta, part of F(1), 3 molecules per monomer), ATP3 (subunit gamma, part of the central stalk), ATP4 (subunit b, part of the peripheral stalk), ATP5/OSCP (subunit 5/OSCP, part of the peripheral stalk), ATP6 (subunit a, part of the peripheral stalk), ATP7 (subunit d, part of the peripheral stalk), ATP8 (subunit 8, part of the peripheral stalk), OLI1 (subunit c, part of the rotor, 10 molecules per monomer), ATP14 (subunit h, part of the peripheral stalk), ATP15 (subunit epsilon, part of the central stalk), ATP16 (subunit delta, part of the central stalk), ATP17 (subunit f, part of the peripheral stalk), ATP18 (subunit i/j, part of the peripheral stalk). Dimer-specific subunits are ATP19 (subunit k, at interface between monomers), ATP20 (subunit g, at interface between monomers), TIM11 (subunit e, at interface between monomers). Also contains subunit L.

The protein localises to the mitochondrion inner membrane. Its function is as follows. Mitochondrial membrane ATP synthase (F(1)F(0) ATP synthase or Complex V) produces ATP from ADP in the presence of a proton gradient across the membrane which is generated by electron transport complexes of the respiratory chain. F-type ATP synthases consist of two structural domains, F(1) - containing the extramembraneous catalytic core, and F(0) - containing the membrane proton channel, linked together by a central stalk and a peripheral stalk. During catalysis, ATP synthesis in the catalytic domain of F(1) is coupled via a rotary mechanism of the central stalk subunits to proton translocation. Part of the complex F(0) domain and the peripheral stalk, which acts as a stator to hold the catalytic alpha/ATP1(3)beta/ATP2(3) subcomplex and subunit a/ATP6 static relative to the rotary elements. This is ATP synthase subunit d, mitochondrial from Pichia angusta (Yeast).